We begin with the raw amino-acid sequence, 467 residues long: Gustatory and odorant receptor 22 (467 aa).

The Cytoplasmic segment spans residues 1-106 (MIHTQMEDAQ…MPRTTFTWCS (106 aa)). Residues 107–127 (KAFLWAYFIYACETVIVLVVA) form a helical membrane-spanning segment. Residues 128–144 (RERINKFISTSDKRFDE) lie on the Extracellular side of the membrane. The helical transmembrane segment at 145 to 165 (VIYNIIFMSIMVPHFLLPVAS) threads the bilayer. At 166–198 (WRNGSEVAKFKNMWTDFQYKYLIVTGKPIVFPK) the chain is on the cytoplasmic side. A helical membrane pass occupies residues 199–219 (LYPITWTLCIVSWSLSLVIIL). Over 220-238 (SQYYLQPDFQFCHTFAYYH) the chain is Extracellular. A helical membrane pass occupies residues 239-259 (IIAMLNGFCSLWFVNCTAFGT). Over 260–304 (ASKAFAKELTDVLATERPAAKLTEYRHLWVDLSHMMQQLGKAYSN) the chain is Cytoplasmic. A helical transmembrane segment spans residues 305–325 (MYGIYCLVIFFTTIIATYGSL). Over 326-337 (SEIIEHGATYKE) the chain is Extracellular. Residues 338–358 (VGLFVIVFYCMSLLFIICNEA) traverse the membrane as a helical segment. Residues 359-414 (HHASKRVGLNFQERLLNVNLTAVDKATQKEVEMFLVAIDKNPPTMNLDGYANINRG) lie on the Cytoplasmic side of the membrane. Residues 415–435 (LITSNISFMATYLVVLMQFKL) form a helical membrane-spanning segment. Residues 436-467 (TLLRQSAKNAFISALKANLSRIRSLDADKVNT) are Extracellular-facing. Residue Asn453 is glycosylated (N-linked (GlcNAc...) asparagine).

It belongs to the insect chemoreceptor superfamily. Gustatory receptor (GR) family. Gr21a subfamily. Carbon dioxide-responsive neurons coexpress GPRgr22 and GPRgr24 in the maxillary palp at both larval and adult life stages.

The protein resides in the cell membrane. In terms of biological role, gustatory receptor which mediates acceptance or avoidance behavior, depending on its substrates. GPRgr22 and GPRgr24 together are sufficient for olfactory carbon dioxide-chemosensation. The polypeptide is Gustatory and odorant receptor 22 (Anopheles gambiae (African malaria mosquito)).